We begin with the raw amino-acid sequence, 303 residues long: Probable 5-dehydro-4-deoxyglucarate dehydratase (303 aa).

The protein belongs to the DapA family.

The enzyme catalyses 5-dehydro-4-deoxy-D-glucarate + H(+) = 2,5-dioxopentanoate + CO2 + H2O. The protein operates within carbohydrate acid metabolism; D-glucarate degradation; 2,5-dioxopentanoate from D-glucarate: step 2/2. In Pseudomonas putida (strain ATCC 700007 / DSM 6899 / JCM 31910 / BCRC 17059 / LMG 24140 / F1), this protein is Probable 5-dehydro-4-deoxyglucarate dehydratase.